A 1785-amino-acid chain; its full sequence is Mellein synthase (1785 aa).

Residues Met-1–Glu-36 form a disordered region. Over residues Ala-8 to Ser-27 the composition is skewed to low complexity. The Ketosynthase family 3 (KS3) domain occupies Tyr-39–Gln-464. Residues Cys-211, His-346, and His-386 each act as for beta-ketoacyl synthase activity in the active site. The segment at Val-575–Val-888 is malonyl-CoA:ACP transacylase (MAT) domain. Ser-661 acts as the For malonyltransferase activity in catalysis. Residues Asn-933–Asn-1047 form an N-terminal hotdog fold region. Residues Asn-933–Lys-1206 form the PKS/mFAS DH domain. The segment at Met-935–Thr-1203 is dehydratase (DH) domain. His-965 (proton acceptor; for dehydratase activity) is an active-site residue. A C-terminal hotdog fold region spans residues Gly-1062 to Lys-1206. The active-site Proton donor; for dehydratase activity is the Asp-1123. The segment at Gly-1418–Arg-1608 is ketoreductase (KR) domain. A compositionally biased stretch (polar residues) spans Gln-1681–Pro-1698. The disordered stretch occupies residues Gln-1681–Ser-1701. A Carrier domain is found at Pro-1706–Phe-1781. Residue Ser-1741 is modified to O-(pantetheine 4'-phosphoryl)serine.

It functions in the pathway secondary metabolite biosynthesis. In terms of biological role, polyketide synthase that produces (R)-mellein, a secondary metabolite that inhibits the germination of wheat (Triticum aestivum) and barrel medic (Medicago truncatula) seeds. Condensates 1 acetate starter unit and 4 extender malonate units. The nascent pentaketide intermediate then undergoes an aldol cyclization and is aromatized via dehydration. The (R)-O-methylmellein isolated from P.nodorum is most likely to be derived from (R)-mellein via an additional methylation at the hydroxyl group. Interestingly, no O-methyltransferase gene is encoded in the vicinity of MLNS on the chromosome. Thus, the O-methylation is likely to be catalyzed by an endogenous O-methyltransferase encoded elsewhere in the genome of P.nodorum. This Phaeosphaeria nodorum (strain SN15 / ATCC MYA-4574 / FGSC 10173) (Glume blotch fungus) protein is Mellein synthase.